Here is a 197-residue protein sequence, read N- to C-terminus: Pyridoxal 5'-phosphate synthase subunit PdxT (197 aa).

54–56 (GES) is a binding site for L-glutamine. Cys-86 (nucleophile) is an active-site residue. Residues Arg-113 and 141–142 (IR) each bind L-glutamine. Active-site charge relay system residues include His-177 and Glu-179.

This sequence belongs to the glutaminase PdxT/SNO family. In terms of assembly, in the presence of PdxS, forms a dodecamer of heterodimers. Only shows activity in the heterodimer.

It catalyses the reaction aldehydo-D-ribose 5-phosphate + D-glyceraldehyde 3-phosphate + L-glutamine = pyridoxal 5'-phosphate + L-glutamate + phosphate + 3 H2O + H(+). The enzyme catalyses L-glutamine + H2O = L-glutamate + NH4(+). Its pathway is cofactor biosynthesis; pyridoxal 5'-phosphate biosynthesis. Functionally, catalyzes the hydrolysis of glutamine to glutamate and ammonia as part of the biosynthesis of pyridoxal 5'-phosphate. The resulting ammonia molecule is channeled to the active site of PdxS. The sequence is that of Pyridoxal 5'-phosphate synthase subunit PdxT from Haloarcula marismortui (strain ATCC 43049 / DSM 3752 / JCM 8966 / VKM B-1809) (Halobacterium marismortui).